The sequence spans 163 residues: MNHYLTPDLCDAYPDLVQVVEPMFSNFGGRDSFGGEIVTIKCFEDNSLVKEQVELKGQGKVLVVDGGGSLRRALLGDMLAEKAAKNGWEGLVIYGCIRDVDVIAQTDLGVQALASHPMKTDKRGIGDLNVAVTFAGVTFRPGEYVYADNNGVIVSPSPLKMPE.

Residues 76–79 and Arg-98 contribute to the substrate site; that span reads GDML. Asp-99 serves as a coordination point for a divalent metal cation.

The protein belongs to the class II aldolase/RraA-like family. As to quaternary structure, homotrimer. Requires a divalent metal cation as cofactor.

It carries out the reaction 4-hydroxy-4-methyl-2-oxoglutarate = 2 pyruvate. It catalyses the reaction oxaloacetate + H(+) = pyruvate + CO2. In terms of biological role, catalyzes the aldol cleavage of 4-hydroxy-4-methyl-2-oxoglutarate (HMG) into 2 molecules of pyruvate. Also contains a secondary oxaloacetate (OAA) decarboxylase activity due to the common pyruvate enolate transition state formed following C-C bond cleavage in the retro-aldol and decarboxylation reactions. This is Putative 4-hydroxy-4-methyl-2-oxoglutarate aldolase from Pseudomonas fluorescens (strain ATCC BAA-477 / NRRL B-23932 / Pf-5).